A 687-amino-acid chain; its full sequence is Homoaconitase, mitochondrial (687 aa).

A mitochondrion-targeting transit peptide spans 1 to 18; sequence MFAFRNRAVTQTLLVRRY. Cysteine 340, cysteine 400, and cysteine 403 together coordinate [4Fe-4S] cluster. Residues 481–490 show a composition bias toward acidic residues; it reads EAEADAEAAE. The interval 481–500 is disordered; that stretch reads EAEADAEAAESDPAPSGGVL.

Belongs to the aconitase/IPM isomerase family. Requires [4Fe-4S] cluster as cofactor.

It localises to the mitochondrion. It carries out the reaction (2R,3S)-homoisocitrate = cis-homoaconitate + H2O. It functions in the pathway amino-acid biosynthesis; L-lysine biosynthesis via AAA pathway; L-alpha-aminoadipate from 2-oxoglutarate: step 3/5. Functionally, catalyzes the reversible hydration of cis-homoaconitate to (2R,3S)-homoisocitrate, a step in the alpha-aminoadipate pathway for lysine biosynthesis. The polypeptide is Homoaconitase, mitochondrial (LYS4) (Yarrowia lipolytica (strain CLIB 122 / E 150) (Yeast)).